We begin with the raw amino-acid sequence, 153 residues long: Pheromone-binding protein Gp-9 (153 aa).

The first 19 residues, 1–19 (MKTLILHICIFALVAFASA), serve as a signal peptide directing secretion. Disulfide bonds link cysteine 37-cysteine 77, cysteine 73-cysteine 129, and cysteine 118-cysteine 138.

It belongs to the PBP/GOBP family. In terms of assembly, homodimer.

Its subcellular location is the secreted. Functionally, colony queen number, a major feature of social organization, is associated with worker genotype for Gp-9. Colonies are headed by either a single reproductive queen (monogyne form) or multiple queens (polygyne form). Differences in worker Gp-9 genotypes between social forms may cause differences in workers' abilities to recognize queens and regulate their numbers. The protein is Pheromone-binding protein Gp-9 of Solenopsis nigella gensterblumi (Fire ant).